Here is a 241-residue protein sequence, read N- to C-terminus: Terpene cyclase olcD (241 aa).

A run of 7 helical transmembrane segments spans residues 19 to 39 (LSDI…FATI), 49 to 71 (WMPL…LYPP), 76 to 95 (ILGF…LRFA), 108 to 128 (YLPV…LALI), 137 to 157 (FYYG…SGLV), 166 to 186 (SYTI…GLFF), and 202 to 222 (LMRW…VQFW).

It belongs to the paxB family.

Its subcellular location is the membrane. Its pathway is secondary metabolite biosynthesis; terpenoid biosynthesis. Terpene cyclase; part of the gene cluster that mediates the biosynthesis of 15-deoxyoxalicine B. The first step of the pathway is the synthesis of nicotinyl-CoA from nicotinic acid by the nicotinic acid-CoA ligase olcI. Nicotinyl-CoA is then a substrate of polyketide synthase olcA to produce 4-hydroxy-6-(3-pyridinyl)-2H-pyran-2-one (HPPO) which is further prenylated by the polyprenyl transferase olcH to yield geranylgeranyl-HPPO. Geranylgeranyl pyrophosphate is provided by the cluster-specific geranylgeranyl pyrophosphate synthase olcC. The FAD-dependent monooxygenase olcE catalyzes the epoxidation of geranylgeranyl-HPPO and the terpene cyclase olcD catalyzes the cyclization of the terpenoid component, resulting in the formation of the tricyclic terpene moiety seen in predecaturin E. The cytochrome P450 monooxygenase then catalyzes the allylic oxidation of predecaturin E, which is followed by spirocylization with concomitant loss of one molecule of water to form decaturin E. Decaturin E is the substrate of the cytochrome P450 monooxygenase olcJ which hydroxylates it at the C-29 position to form decaturin F. The short-chain dehydrogenase/reductase olcF may catalyze the oxidation of decaturin F to generate the 29-hydroxyl-27-one intermediate, and subsequent hemiacetal formation probably leads to the formation of decaturin C. The dioxygenase olcK may be a peroxisomal enzyme that catalyzes the hydroxylation of decaturin C into decaturin A once decaturin C is shuttled into the peroxisome by the MFS transporter olcL. Finally the cytochrome P450 monooxygenase olcB catalyzes the oxidative rearrangement to yield 15-deoxyoxalicine B. In the absence of olcJ, decaturin E may be shunted to a pathway in which it is oxidized to a ketone, possibly by olcF, to form decaturin D, which undergoes further allylic oxidation to yield decaturin G. Moreover, in the absence of oclK or oclL, oclB can convert decaturin C into 15-deoxyoxalicine A. This chain is Terpene cyclase olcD, found in Penicillium canescens.